Here is an 827-residue protein sequence, read N- to C-terminus: ADP-ribosylation factor GTPase-activating protein AGD3 (827 aa).

Residues 1–225 form the BAR domain; that stretch reads MHFTKLDDSP…INQVLTYAQQ (225 aa). 2 coiled-coil regions span residues 116 to 139 and 223 to 253; these read HEVK…REKF and AQQS…RESR. Residues 246–269 form a disordered region; it reads RQVDRESRWGSNGSNGSPNGDGIQ. Positions 255 to 267 are enriched in low complexity; it reads GSNGSNGSPNGDG. The PH domain maps to 292–430; the sequence is QTIRQGYLSK…WIEKITGVIA (139 aa). The tract at residues 439 to 467 is disordered; it reads EQRLPGSPMGSGHHRSASESSSYESSEYD. Ser445 carries the phosphoserine modification. The region spanning 501–643 is the Arf-GAP domain; the sequence is EKPIDALRKV…LFVRRSRDSD (143 aa). The C4-type zinc finger occupies 516 to 539; the sequence is CADCGAPEPDWASLNLGVLVCIEC. ANK repeat units follow at residues 728-757, 761-790, and 794-825; these read GGSS…NVNA, SGQT…DPEA, and EGKT…YNHR.

In terms of assembly, homodimer. Interacts with DRP1A. Interacts with VAB. In terms of tissue distribution, broadly expressed. Detected in developing veins of the leaf and root. Detected in roots, hypocotyls, cotyledons, leaves, siliques and shoot apical meristems.

It localises to the golgi apparatus. Its subcellular location is the trans-Golgi network. With respect to regulation, ARF GAP activity strongly enhanced by phosphatidylinositol 4-monophosphate (PIP) and moderately enhanced by phosphatidylinositol 4,5-bisphosphate (PIP2). Functionally, GTPase-activating protein (GAP) for ADP ribosylation factor (ARF). Involved in the spatial control of provascular differentiation. Required for the formation of the normal pattern of continuous secondary veins. Involved in auxin signaling but not in polar auxin transport or in auxin responses. Required for PIN1 internalization in roots. The chain is ADP-ribosylation factor GTPase-activating protein AGD3 (AGD3) from Arabidopsis thaliana (Mouse-ear cress).